Consider the following 130-residue polypeptide: Small ribosomal subunit protein uS9 (130 aa).

Belongs to the universal ribosomal protein uS9 family.

This is Small ribosomal subunit protein uS9 from Blochmanniella floridana.